The primary structure comprises 369 residues: Serine/threonine-protein kinase srb10 (369 aa).

The Protein kinase domain maps to 5–319; it reads YKIIGFISSG…AKQALEHVFF (315 aa). ATP-binding positions include 11-19 and Lys36; that span reads ISSGTYGKV. Residue Asp140 is the Proton acceptor of the active site.

It belongs to the protein kinase superfamily. CMGC Ser/Thr protein kinase family. CDC2/CDKX subfamily. As to quaternary structure, component of the Cdk8 module of the Mediator complex. The Cdk8 module is composed of srb8, srb9, srb10 and srb11. Interacts with med17 and med18.

It localises to the nucleus. The enzyme catalyses L-seryl-[protein] + ATP = O-phospho-L-seryl-[protein] + ADP + H(+). It carries out the reaction L-threonyl-[protein] + ATP = O-phospho-L-threonyl-[protein] + ADP + H(+). It catalyses the reaction [DNA-directed RNA polymerase] + ATP = phospho-[DNA-directed RNA polymerase] + ADP + H(+). Catalytic component of the Cdk8 module/Srb8-11 module which is a regulatory module of the Mediator complex that regulates basal RNA polymerase II transcription. The Cdk8 module may sterically hinder the interaction between Mediator and RNA polymerase II leading to transcriptional repression of a subset of genes regulated by Mediator. This chain is Serine/threonine-protein kinase srb10 (srb10), found in Schizosaccharomyces pombe (strain 972 / ATCC 24843) (Fission yeast).